The sequence spans 603 residues: Arginine--tRNA ligase (603 aa).

Positions 143–153 (PNIAKEMHVGH) match the 'HIGH' region motif.

This sequence belongs to the class-I aminoacyl-tRNA synthetase family. Monomer.

Its subcellular location is the cytoplasm. The enzyme catalyses tRNA(Arg) + L-arginine + ATP = L-arginyl-tRNA(Arg) + AMP + diphosphate. This chain is Arginine--tRNA ligase, found in Prochlorococcus marinus (strain MIT 9211).